The following is a 246-amino-acid chain: Small ribosomal subunit protein uS2 (246 aa).

The tract at residues 224 to 246 (AKQGEEEAEAAEETAPETETTTA) is disordered. Residues 229–239 (EEAEAAEETAP) are compositionally biased toward acidic residues.

This sequence belongs to the universal ribosomal protein uS2 family.

This chain is Small ribosomal subunit protein uS2, found in Bacillus velezensis (strain DSM 23117 / BGSC 10A6 / LMG 26770 / FZB42) (Bacillus amyloliquefaciens subsp. plantarum).